A 198-amino-acid chain; its full sequence is Recombination protein RecR (198 aa).

The C4-type zinc finger occupies 57 to 72; that stretch reads CSVCGRLTDDDPCIIC. The region spanning 80–175 is the Toprim domain; sequence TKILVVEDSK…KVTRLARGLA (96 aa).

This sequence belongs to the RecR family.

In terms of biological role, may play a role in DNA repair. It seems to be involved in an RecBC-independent recombinational process of DNA repair. It may act with RecF and RecO. The polypeptide is Recombination protein RecR (Streptococcus thermophilus (strain CNRZ 1066)).